The following is a 393-amino-acid chain: Formate-dependent phosphoribosylglycinamide formyltransferase (393 aa).

N(1)-(5-phospho-beta-D-ribosyl)glycinamide is bound by residues 22–23 (EL) and E82. ATP contacts are provided by residues R114, K155, 160-165 (SSGKGQ), 195-198 (ESFV), and E203. The ATP-grasp domain occupies 119–308 (RLAAEEVGLK…EFALHVRAIL (190 aa)). E267 and E279 together coordinate Mg(2+). N(1)-(5-phospho-beta-D-ribosyl)glycinamide is bound by residues D286, K356, and 363-364 (RR).

It belongs to the PurK/PurT family. Homodimer.

It carries out the reaction N(1)-(5-phospho-beta-D-ribosyl)glycinamide + formate + ATP = N(2)-formyl-N(1)-(5-phospho-beta-D-ribosyl)glycinamide + ADP + phosphate + H(+). The protein operates within purine metabolism; IMP biosynthesis via de novo pathway; N(2)-formyl-N(1)-(5-phospho-D-ribosyl)glycinamide from N(1)-(5-phospho-D-ribosyl)glycinamide (formate route): step 1/1. Functionally, involved in the de novo purine biosynthesis. Catalyzes the transfer of formate to 5-phospho-ribosyl-glycinamide (GAR), producing 5-phospho-ribosyl-N-formylglycinamide (FGAR). Formate is provided by PurU via hydrolysis of 10-formyl-tetrahydrofolate. The chain is Formate-dependent phosphoribosylglycinamide formyltransferase from Maridesulfovibrio salexigens (strain ATCC 14822 / DSM 2638 / NCIMB 8403 / VKM B-1763) (Desulfovibrio salexigens).